The primary structure comprises 441 residues: ATP-dependent protease ATPase subunit HslU (441 aa).

ATP-binding positions include I18, 60 to 65 (GVGKTE), D254, E319, and R391.

Belongs to the ClpX chaperone family. HslU subfamily. A double ring-shaped homohexamer of HslV is capped on each side by a ring-shaped HslU homohexamer. The assembly of the HslU/HslV complex is dependent on binding of ATP.

It localises to the cytoplasm. Its function is as follows. ATPase subunit of a proteasome-like degradation complex; this subunit has chaperone activity. The binding of ATP and its subsequent hydrolysis by HslU are essential for unfolding of protein substrates subsequently hydrolyzed by HslV. HslU recognizes the N-terminal part of its protein substrates and unfolds these before they are guided to HslV for hydrolysis. The sequence is that of ATP-dependent protease ATPase subunit HslU from Shewanella loihica (strain ATCC BAA-1088 / PV-4).